Here is a 118-residue protein sequence, read N- to C-terminus: Large ribosomal subunit protein eL18 (118 aa).

The protein belongs to the eukaryotic ribosomal protein eL18 family.

The sequence is that of Large ribosomal subunit protein eL18 (rpl18e) from Sulfolobus acidocaldarius (strain ATCC 33909 / DSM 639 / JCM 8929 / NBRC 15157 / NCIMB 11770).